We begin with the raw amino-acid sequence, 480 residues long: Protein nucleotidyltransferase YdiU (480 aa).

Glycine 86, glycine 88, arginine 89, lysine 109, aspartate 121, glycine 122, arginine 172, and arginine 179 together coordinate ATP. Aspartate 248 acts as the Proton acceptor in catalysis. The Mg(2+) site is built by asparagine 249 and aspartate 258. Aspartate 258 serves as a coordination point for ATP.

It belongs to the SELO family. Mg(2+) is required as a cofactor. The cofactor is Mn(2+).

The enzyme catalyses L-seryl-[protein] + ATP = 3-O-(5'-adenylyl)-L-seryl-[protein] + diphosphate. The catalysed reaction is L-threonyl-[protein] + ATP = 3-O-(5'-adenylyl)-L-threonyl-[protein] + diphosphate. It carries out the reaction L-tyrosyl-[protein] + ATP = O-(5'-adenylyl)-L-tyrosyl-[protein] + diphosphate. It catalyses the reaction L-histidyl-[protein] + UTP = N(tele)-(5'-uridylyl)-L-histidyl-[protein] + diphosphate. The enzyme catalyses L-seryl-[protein] + UTP = O-(5'-uridylyl)-L-seryl-[protein] + diphosphate. The catalysed reaction is L-tyrosyl-[protein] + UTP = O-(5'-uridylyl)-L-tyrosyl-[protein] + diphosphate. Functionally, nucleotidyltransferase involved in the post-translational modification of proteins. It can catalyze the addition of adenosine monophosphate (AMP) or uridine monophosphate (UMP) to a protein, resulting in modifications known as AMPylation and UMPylation. This is Protein nucleotidyltransferase YdiU from Salmonella typhi.